Reading from the N-terminus, the 443-residue chain is Glutamine synthetase (443 aa).

One can recognise a GS beta-grasp domain in the interval 16-101 (NGVKFIRLQF…LICDVYKPDG (86 aa)). The 336-residue stretch at 108 to 443 (PRHVLKRANA…WELENYLNKY (336 aa)) folds into the GS catalytic domain. Mg(2+) is bound by residues Glu-131 and Glu-133. Glu-183 contacts ATP. Positions 188 and 195 each coordinate Mg(2+). L-glutamate contacts are provided by residues 239 to 240 (NG) and Gly-240. His-244 serves as a coordination point for Mg(2+). An ATP-binding site is contributed by Ser-248. The L-glutamate site is built by Arg-297, Glu-303, and Arg-315. ATP is bound by residues Arg-315 and Arg-320. A Mg(2+)-binding site is contributed by Glu-332. Arg-334 lines the L-glutamate pocket.

Belongs to the glutamine synthetase family. In terms of assembly, oligomer of 12 subunits arranged in the form of two hexagons. In its feedback-inhibited form, interacts with TnrA in order to block its DNA-binding activity. Mg(2+) is required as a cofactor.

The protein localises to the cytoplasm. It catalyses the reaction L-glutamate + NH4(+) + ATP = L-glutamine + ADP + phosphate + H(+). Its activity is regulated as follows. Inhibited by glutamine. In terms of biological role, glutamine synthetase (GS) is an unusual multitasking protein that functions as an enzyme, a transcription coregulator, and a chaperone in ammonium assimilation and in the regulation of genes involved in nitrogen metabolism. It catalyzes the ATP-dependent biosynthesis of glutamine from glutamate and ammonia. Feedback-inhibited GlnA also interacts with and regulates the activity of the transcriptional regulator TnrA. During nitrogen limitation, TnrA is in its DNA-binding active state and turns on the transcription of genes required for nitrogen assimilation. Under conditions of nitrogen excess, feedback-inhibited GlnA forms a stable complex with TnrA, which inhibits its DNA-binding activity. In contrast, feedback-inhibited GlnA acts as a chaperone to stabilize the DNA-binding activity of GlnR, which represses the transcription of nitrogen assimilation genes. The protein is Glutamine synthetase of Clostridium saccharobutylicum.